The primary structure comprises 722 residues: MFRQWSVQSGPAPRRPESQAASEELWEQEVERLCASRTPVRMLPYAMADKRFIRELREPEGVKTTFWQRWHRPRRVARQHLREAEQRLARGFGLWEGALYEIGGLFGTGIQSYFTFLRFLLLLNLLTMLLTACFVLLPLVWLRPPELGPALKLRLQCSSSPLPQSDIPRFHNPLWNILTGRAFNNTYLFYGAYRAGPESSSEYSIRLAYLLSPMVCLLLCFCGILQRMAEGLPQQTLLGQRYRTPLSAKVFSSWDFCIRVWEAATIKKHEISNELKMELEEGRRVELAQQQTRAQKACRLLTYLRTNILIVLLVVGAISAIFWATKYSQDNKEESLFLVLQYLPPGVISLVNFLGPQLFTVLIQLENYPPGTEVNLTLIWCVVLKLASLGMFSFSLGQTVLCIGRNKTSCESYGYNACDYQCWENSVGEELYKLIIFNFLLTVAFAFLVSLPRRLLVERFSGWFWTWLDREEFLVPKNVLDIVAAQTVTWMGLFYCPLLPLLNSVFLFLTFYIKKYTLLRNSRASPRRFRASSSTFFFHLVLLLGLLLAAVPLAYVISSTHSSWDCGLFTNYSAPWQVVPELVALQLPLPSQRALRYLSSHAFSFPLLILLSIVLTVCISQSRANARAIQGLRKQLVWQVQEKWHLVDDLSRLLPELSPEPGSPHSRASRPRSFCPGFPCPGSPGPRTPRLAPSNRLSSSSLGAPSASVPASRFHFPSRTEL.

Residues 1 to 21 (MFRQWSVQSGPAPRRPESQAA) are disordered. Residues 1–118 (MFRQWSVQSG…GIQSYFTFLR (118 aa)) lie on the Cytoplasmic side of the membrane. A phosphoserine mark is found at Ser-6 and Ser-18. The chain crosses the membrane as a helical span at residues 119–139 (FLLLLNLLTMLLTACFVLLPL). The Lumenal portion of the chain corresponds to 140 to 204 (VWLRPPELGP…AGPESSSEYS (65 aa)). Asn-184 carries N-linked (GlcNAc...) asparagine glycosylation. The chain crosses the membrane as a helical span at residues 205-225 (IRLAYLLSPMVCLLLCFCGIL). Over 226–307 (QRMAEGLPQQ…CRLLTYLRTN (82 aa)) the chain is Cytoplasmic. The chain crosses the membrane as a helical span at residues 308-328 (ILIVLLVVGAISAIFWATKYS). Residues 329–375 (QDNKEESLFLVLQYLPPGVISLVNFLGPQLFTVLIQLENYPPGTEVN) are Lumenal-facing. A TMC domain region spans residues 366-534 (ENYPPGTEVN…SPRRFRASSS (169 aa)). Residue Asn-375 is glycosylated (N-linked (GlcNAc...) asparagine). The helical transmembrane segment at 376–396 (LTLIWCVVLKLASLGMFSFSL) threads the bilayer. Residues 397 to 430 (GQTVLCIGRNKTSCESYGYNACDYQCWENSVGEE) are Cytoplasmic-facing. The helical transmembrane segment at 431–451 (LYKLIIFNFLLTVAFAFLVSL) threads the bilayer. The Lumenal segment spans residues 452–492 (PRRLLVERFSGWFWTWLDREEFLVPKNVLDIVAAQTVTWMG). Residues 493–513 (LFYCPLLPLLNSVFLFLTFYI) traverse the membrane as a helical segment. At 514–536 (KKYTLLRNSRASPRRFRASSSTF) the chain is on the cytoplasmic side. The helical transmembrane segment at 537-557 (FFHLVLLLGLLLAAVPLAYVI) threads the bilayer. The Lumenal portion of the chain corresponds to 558-598 (SSTHSSWDCGLFTNYSAPWQVVPELVALQLPLPSQRALRYL). An N-linked (GlcNAc...) asparagine glycan is attached at Asn-571. The chain crosses the membrane as a helical span at residues 599 to 619 (SSHAFSFPLLILLSIVLTVCI). Over 620–722 (SQSRANARAI…RFHFPSRTEL (103 aa)) the chain is Cytoplasmic. Phosphoserine occurs at positions 658, 663, and 673. The segment at 658 to 722 (SPEPGSPHSR…RFHFPSRTEL (65 aa)) is disordered. Over residues 678-687 (FPCPGSPGPR) the composition is skewed to pro residues. The span at 689 to 712 (PRLAPSNRLSSSSLGAPSASVPAS) shows a compositional bias: low complexity. Ser-698 carries the phosphoserine modification.

Belongs to the TMC family. Interacts with TMC6. Interacts and forms a complex with TMC6 and CIB1; the interaction stabilizes each component of the complex. Interacts and forms a complex with TMC6 and SLC30A1/ZNT1; the interaction regulates zinc transport into the ER. Interacts with TRADD; the interaction competes with TRADD/RIPK1/TRAF2/cIAPs complex I formation and facilites complex II formation. Expressed in thymus, lung, prostate, placenta, testis and spleen. Expressed in lymphocytes and peripheral lymphocytes.

The protein localises to the endoplasmic reticulum membrane. It localises to the golgi apparatus membrane. Its subcellular location is the nucleus membrane. Functionally, acts as a regulatory protein involved in the regulation of numerous cellular processes. Together with its homolog TMC6/EVER1, forms a complex with calcium-binding protein CIB1 in lymphocytes and keratynocytes where TMC6 and TMC8 stabilize CIB1 levels and reciprocally. Together with TMC6, also forms a complex with and activates zinc transporter ZNT1 at the ER membrane of keratynocytes, thereby facilitating zinc uptake into the ER. Also inhibits receptor-mediated calcium release from ER stores and calcium activated and volume regulated chloride channels. Down-regulates the activity of transcription factors induced by zinc and cytokines. Also sequesters TRADD which impairs the recruitment of TRAF2 and RIPK1 in the pro-survival complex I and promotes proapoptotic complex II formation, and may therefore be involved in TNF-induced cell death/survival decisions. In Mus musculus (Mouse), this protein is Transmembrane channel-like protein 8.